The chain runs to 631 residues: KIF-binding protein (631 aa).

Positions 60–70 (EQGEAGDEADC) are enriched in acidic residues. The tract at residues 60–88 (EQGEAGDEADCESSQTADGEPEDGFEKTF) is disordered.

This sequence belongs to the KIF-binding protein family. At 30 hpf, primarily expressed in central and peripheral neurons.

It localises to the cytoplasm. The protein localises to the cytoskeleton. Functionally, activator of KIF1B plus-end-directed microtubule motor activity. Required for organization of axonal microtubules, and axonal outgrowth and maintenance during peripheral and central nervous system development. In Danio rerio (Zebrafish), this protein is KIF-binding protein (kifbp).